The sequence spans 971 residues: Mating-type switching protein swi1 (971 aa).

S528, S536, and S970 each carry phosphoserine.

Fork protection complex (FPC) consisting of swi1 and swi3 interacts with mat1 cis-acting sequences and mat1-proximal polar-terminator of replication (RTS1).

The protein localises to the nucleus. In terms of biological role, forms a fork protection complex (FPC) with swi3. FPC coordinates leading and lagging strand synthesis and moves with the replication fork. It is required for programmed fork-pausing which is necessary for mating-type switching. FPC stabilizes replication forks in a configuration that is recognized by replication checkpoint sensors. It is involved in termination at the mat1-proximal polar-terminator of replication (RTS1) and also required for activation of the Rad53-like checkpoint kinase cds1. The chain is Mating-type switching protein swi1 (swi1) from Schizosaccharomyces pombe (strain 972 / ATCC 24843) (Fission yeast).